Consider the following 446-residue polypeptide: Putative RNA-ligase (446 aa).

It belongs to the asfivirus M448R family.

It localises to the virion. The polypeptide is Putative RNA-ligase (African swine fever virus (isolate Tick/Malawi/Lil 20-1/1983) (ASFV)).